A 235-amino-acid chain; its full sequence is Small ribosomal subunit protein uS3 (235 aa).

The region spanning 39–107 (IRTYIENELK…ETHLNIVEVR (69 aa)) is the KH type-2 domain. The segment at 215 to 235 (SERRAVEGAGDGGGQRRRENA) is disordered.

This sequence belongs to the universal ribosomal protein uS3 family. Part of the 30S ribosomal subunit. Forms a tight complex with proteins S10 and S14.

Binds the lower part of the 30S subunit head. Binds mRNA in the 70S ribosome, positioning it for translation. The polypeptide is Small ribosomal subunit protein uS3 (Chelativorans sp. (strain BNC1)).